The sequence spans 382 residues: D-galactonate dehydratase (382 aa).

Residue aspartate 183 participates in Mg(2+) binding. Histidine 185 (proton donor) is an active-site residue. Mg(2+) is bound by residues glutamate 209 and glutamate 235. Residue histidine 285 is the Proton acceptor of the active site. Positions 361–382 (NENPPDWRNPVWRHSDGSIAEW) are disordered.

It belongs to the mandelate racemase/muconate lactonizing enzyme family. GalD subfamily. Mg(2+) is required as a cofactor.

The enzyme catalyses D-galactonate = 2-dehydro-3-deoxy-D-galactonate + H2O. Its pathway is carbohydrate acid metabolism; D-galactonate degradation; D-glyceraldehyde 3-phosphate and pyruvate from D-galactonate: step 1/3. Its function is as follows. Catalyzes the dehydration of D-galactonate to 2-keto-3-deoxy-D-galactonate. The sequence is that of D-galactonate dehydratase from Xanthomonas axonopodis pv. citri (strain 306).